The primary structure comprises 212 residues: ATP phosphoribosyltransferase (212 aa).

This sequence belongs to the ATP phosphoribosyltransferase family. Short subfamily. In terms of assembly, heteromultimer composed of HisG and HisZ subunits.

It localises to the cytoplasm. The catalysed reaction is 1-(5-phospho-beta-D-ribosyl)-ATP + diphosphate = 5-phospho-alpha-D-ribose 1-diphosphate + ATP. It functions in the pathway amino-acid biosynthesis; L-histidine biosynthesis; L-histidine from 5-phospho-alpha-D-ribose 1-diphosphate: step 1/9. Functionally, catalyzes the condensation of ATP and 5-phosphoribose 1-diphosphate to form N'-(5'-phosphoribosyl)-ATP (PR-ATP). Has a crucial role in the pathway because the rate of histidine biosynthesis seems to be controlled primarily by regulation of HisG enzymatic activity. The protein is ATP phosphoribosyltransferase of Prochlorococcus marinus (strain MIT 9515).